A 521-amino-acid chain; its full sequence is Alkyl hydroperoxide reductase subunit F (521 aa).

At Lys-53 the chain carries N6-acetyllysine. 214 to 229 (DVLIVGSGPAGAAAAI) lines the FAD pocket. Cys-345 and Cys-348 are joined by a disulfide. Lys-354 is subject to N6-acetyllysine. An NAD(+)-binding site is contributed by 357–371 (RVAVIGGGNSGVEAA). 478-488 (TNVKGVFAAGD) lines the FAD pocket.

It belongs to the class-II pyridine nucleotide-disulfide oxidoreductase family. Homodimer. It depends on FAD as a cofactor.

Its function is as follows. Serves to protect the cell against DNA damage by alkyl hydroperoxides. It can use either NADH or NADPH as electron donor for direct reduction of redox dyes or of alkyl hydroperoxides when combined with the AhpC protein. This chain is Alkyl hydroperoxide reductase subunit F (ahpF), found in Escherichia coli (strain K12).